A 469-amino-acid chain; its full sequence is Ribulose bisphosphate carboxylase large chain (469 aa).

The residue at position 8 (Lys-8) is an N6,N6,N6-trimethyllysine. Residues Asn-117 and Thr-167 each coordinate substrate. Lys-169 serves as the catalytic Proton acceptor. Substrate is bound at residue Lys-171. Mg(2+) is bound by residues Lys-195, Asp-197, and Glu-198. Position 195 is an N6-carboxylysine (Lys-195). His-288 (proton acceptor) is an active-site residue. Residues Arg-289, His-321, and Ser-373 each contribute to the substrate site.

Belongs to the RuBisCO large chain family. Type I subfamily. Heterohexadecamer of 8 large chains and 8 small chains; disulfide-linked. The disulfide link is formed within the large subunit homodimers. The cofactor is Mg(2+). Post-translationally, the disulfide bond which can form in the large chain dimeric partners within the hexadecamer appears to be associated with oxidative stress and protein turnover.

The protein localises to the plastid. It localises to the chloroplast. It catalyses the reaction 2 (2R)-3-phosphoglycerate + 2 H(+) = D-ribulose 1,5-bisphosphate + CO2 + H2O. The catalysed reaction is D-ribulose 1,5-bisphosphate + O2 = 2-phosphoglycolate + (2R)-3-phosphoglycerate + 2 H(+). RuBisCO catalyzes two reactions: the carboxylation of D-ribulose 1,5-bisphosphate, the primary event in carbon dioxide fixation, as well as the oxidative fragmentation of the pentose substrate in the photorespiration process. Both reactions occur simultaneously and in competition at the same active site. The chain is Ribulose bisphosphate carboxylase large chain from Persicaria senticosa (Knotweed).